A 292-amino-acid chain; its full sequence is MATLKDIRTRIKGVKSTQQVTKAMKMVAAAKLRRAQESAVQARPYAAKLKEMLGSLSTKVDTSLNPMLSARDEVGRVLVVLITSDRGLCGAFNTNIIKVAQKVMTVDHADLHKSGKVDLICAGSKGYDFFRKRDYRILKGYPGVFQNLDFSVAKEIAEQASGMYLRGEVDKVVVVYNEFKSVLAPNLKSEVLLPITPEGSGDEGGSDYIYEPSPASIIDVLVPKHLNTQVWRMMLESNAAEQAARMAAMDSATENAKELLRLLNISYNRARQAAITTELSEIVAGAEALQGT.

Belongs to the ATPase gamma chain family. F-type ATPases have 2 components, CF(1) - the catalytic core - and CF(0) - the membrane proton channel. CF(1) has five subunits: alpha(3), beta(3), gamma(1), delta(1), epsilon(1). CF(0) has three main subunits: a, b and c.

The protein resides in the cell membrane. Its function is as follows. Produces ATP from ADP in the presence of a proton gradient across the membrane. The gamma chain is believed to be important in regulating ATPase activity and the flow of protons through the CF(0) complex. The chain is ATP synthase gamma chain from Prosthecochloris aestuarii (strain DSM 271 / SK 413).